Reading from the N-terminus, the 101-residue chain is Small ribosomal subunit protein uS10 (101 aa).

It belongs to the universal ribosomal protein uS10 family. As to quaternary structure, part of the 30S ribosomal subunit.

In terms of biological role, involved in the binding of tRNA to the ribosomes. The sequence is that of Small ribosomal subunit protein uS10 from Mycobacterium bovis (strain ATCC BAA-935 / AF2122/97).